Reading from the N-terminus, the 561-residue chain is Sperm-tail PG-rich repeat-containing protein 2 (561 aa).

STPGR repeat units lie at residues 21 to 34 (VGPG…PKQQ), 63 to 72 (PGPAHYNVSQ), and 97 to 104 (GPGPGSYN). Residues 123 to 143 (PAVSRNIDIPSIPSSGKSHGY) form a disordered region. STPGR repeat units follow at residues 164 to 191 (GPAY…NATG), 200 to 210 (GPGPGQYDIIQ), 250 to 285 (PGPG…TERF), 292 to 299 (TPAPGTYN), 334 to 367 (LPGP…FGSS), 421 to 438 (LPAP…MSQV), and 471 to 481 (GPGPATYSPVL).

This chain is Sperm-tail PG-rich repeat-containing protein 2 (Stpg2), found in Mus musculus (Mouse).